The sequence spans 249 residues: (S)-1-Phenylethanol dehydrogenase (249 aa).

NAD(+) contacts are provided by residues 17–19 (NGI), Asp-38, 61–63 (CDV), Asn-89, and Tyr-93. A substrate-binding site is contributed by Ser-141. Tyr-154 functions as the Proton acceptor in the catalytic mechanism. Residues Lys-158, 184 to 187 (PSLV), and Thr-191 contribute to the NAD(+) site.

The protein belongs to the short-chain dehydrogenases/reductases (SDR) family. Homotetramer.

The catalysed reaction is (S)-1-phenylethanol + NAD(+) = acetophenone + NADH + H(+). In terms of biological role, catalyzes the NAD-dependent stereospecific oxidation of (S)-1-phenylethanol to acetophenone in the degradation of ethylbenzene. The polypeptide is (S)-1-Phenylethanol dehydrogenase (ped) (Aromatoleum aromaticum (strain DSM 19018 / LMG 30748 / EbN1) (Azoarcus sp. (strain EbN1))).